The sequence spans 675 residues: MQRAMLLGLLGAAALAAVISAPVDNRDHNEEMVTRCIIEVLSNALSKSSAPTITPECRQVLRKSGKEVKGEEKGENENSKFEVRLLRDPSDASVGRWASSREETGAPVEDSPGQAKVDNEEWTGGGGHSREAVDDQESLHPSNQQVSKEAKIRHSEERGGKEEEEEEGKIYPKGEHRGDAGEEKKHTEESGEKHNAFSNKRSEASAKKKEESVARAEAHFVELEKTHSREQSSQESGEETRRQEKPQELPDQDQSEEESEEGEEGEEGATSEVTKRRPRHHHWRSQSNKPSYEGRRPLSEERKHAAGESKDANVATANLGEKRGHHLAHYRASEEEPDYGEELRSYPGFQAPQGLQYQGRGSEEVRAPSPRSEESQEKEYKRNHPDSELESTANRHSEETEEERSYEGAKGRQHRGRGREPGAYPALDSRQEKRLLDEGHDPVHESPVDTAKRYPQSKWQEQEKNYLNYDEEGDQGRWWQQEEQLEPEESREEVSFPDRQYAPYPTTEKRKRLGALFNPYFDPLQWKNSDFEKKGNPDDSFLDDDGEDGNGVTMTEKNFFPEYNYDWWEKRPFSEDVNWGYEKRSFARAPHLDLKRQYDDGVAELDQLLHYRKKAAEFPDFYDSEEQMGPHQEAEDEKDRADQRVLTEEEKKELENLAAMDLELQKIAEKFSQRG.

The N-terminal stretch at 1–20 (MQRAMLLGLLGAAALAAVIS) is a signal peptide. Cys-36 and Cys-57 form a disulfide bridge. Residues 64-90 (SGKEVKGEEKGENENSKFEVRLLRDPS) are compositionally biased toward basic and acidic residues. Disordered stretches follow at residues 64–507 (SGKE…YPTT) and 528–555 (NSDF…VTMT). 5 positions are modified to phosphoserine: Ser-93, Ser-99, Ser-100, Ser-129, and Ser-147. A glycan (O-linked (Xyl...) (chondroitin sulfate) serine) is linked at Ser-93. 2 stretches are compositionally biased toward basic and acidic residues: residues 148–161 (KEAK…RGGK) and 168–248 (GKIY…KPQE). Ser-190 carries the post-translational modification Phosphoserine. O-linked (Xyl...) (chondroitin sulfate) serine glycosylation occurs at Ser-236. Residues 250–269 (PDQDQSEEESEEGEEGEEGA) show a composition bias toward acidic residues. Ser-255, Ser-259, Ser-291, Ser-309, and Ser-333 each carry phosphoserine. Over residues 292–311 (YEGRRPLSEERKHAAGESKD) the composition is skewed to basic and acidic residues. Tyr-339 is modified (sulfotyrosine). Basic and acidic residues-rich tracts occupy residues 361 to 410 (GSEE…EGAK) and 429 to 452 (SRQE…DTAK). A phosphoserine mark is found at Ser-362, Ser-372, Ser-375, and Ser-397. Tyr-469 bears the Sulfotyrosine mark. 3 positions are modified to phosphoserine: Ser-490, Ser-529, and Ser-540. Tyr-563 is subject to Sulfotyrosine. Residues 620–646 (DFYDSEEQMGPHQEAEDEKDRADQRVL) form a disordered region. Tyr-622 carries the sulfotyrosine; partial modification. Ser-624 carries the post-translational modification Phosphoserine. Residues 637 to 646 (EKDRADQRVL) show a composition bias toward basic and acidic residues. Arg-674 bears the Arginine amide; in CCB peptide short form mark.

It belongs to the chromogranin/secretogranin protein family. In terms of assembly, interacts with ITPR1 in the secretory granules. Post-translationally, extensively processed in glucagonoma tissue by limited proteolysis at conserved basic residues. Alternative processing are seen in different tissues. The proglucagon-converting enzymes present in transformed alpha-cells are likely candidates to be involved in tissue-specific processing. Expressed in the brain, adrenal medulla and anterior pituitary. In the brain, localized to the hippocampal formation, the endocrine hypothalamus, the olfactory system, and in anatomically distinct structures in the pons-medulla.

Its subcellular location is the secreted. Functionally, secretogranin-1 is a neuroendocrine secretory granule protein, which may be the precursor for other biologically active peptides. This is Secretogranin-1 (Chgb) from Rattus norvegicus (Rat).